Consider the following 804-residue polypeptide: Exo-1,4-beta-xylosidase xlnD (804 aa).

A signal peptide spans 1-26 (MAHSMSRPVAATAAALLALALPQALA). Asparagine 29, asparagine 124, asparagine 148, asparagine 242, and asparagine 251 each carry an N-linked (GlcNAc...) asparagine glycan. Residue aspartate 315 is part of the active site. Residues asparagine 357, asparagine 390, asparagine 413, asparagine 444, asparagine 455, asparagine 573, asparagine 665, asparagine 696, and asparagine 718 are each glycosylated (N-linked (GlcNAc...) asparagine).

This sequence belongs to the glycosyl hydrolase 3 family.

It localises to the secreted. It catalyses the reaction Hydrolysis of (1-&gt;4)-beta-D-xylans, to remove successive D-xylose residues from the non-reducing termini.. It participates in glycan degradation; xylan degradation. In terms of biological role, xylan 1,4-beta-xylosidase involved in the hydrolysis of xylan, a major structural heterogeneous polysaccharide found in plant biomass representing the second most abundant polysaccharide in the biosphere, after cellulose. The sequence is that of Exo-1,4-beta-xylosidase xlnD (xlnD) from Aspergillus awamori (Black koji mold).